Consider the following 154-residue polypeptide: Ribosome maturation factor RimP (154 aa).

This sequence belongs to the RimP family.

The protein resides in the cytoplasm. Required for maturation of 30S ribosomal subunits. The chain is Ribosome maturation factor RimP from Haemophilus ducreyi (strain 35000HP / ATCC 700724).